The following is a 465-amino-acid chain: Na(+)-translocating NADH-quinone reductase subunit A (465 aa).

It belongs to the NqrA family. As to quaternary structure, composed of six subunits; NqrA, NqrB, NqrC, NqrD, NqrE and NqrF.

The catalysed reaction is a ubiquinone + n Na(+)(in) + NADH + H(+) = a ubiquinol + n Na(+)(out) + NAD(+). In terms of biological role, NQR complex catalyzes the reduction of ubiquinone-1 to ubiquinol by two successive reactions, coupled with the transport of Na(+) ions from the cytoplasm to the periplasm. NqrA to NqrE are probably involved in the second step, the conversion of ubisemiquinone to ubiquinol. The sequence is that of Na(+)-translocating NADH-quinone reductase subunit A from Chlamydia trachomatis serovar L2 (strain ATCC VR-902B / DSM 19102 / 434/Bu).